Reading from the N-terminus, the 534-residue chain is Serine protease vicPb (534 aa).

The N-terminal stretch at 1–17 is a signal peptide; it reads MLRYLLIPILYLQVVLG. N-linked (GlcNAc...) asparagine glycans are attached at residues Asn-34, Asn-65, and Asn-126. The active-site Charge relay system is Ser-174. 5 N-linked (GlcNAc...) asparagine glycosylation sites follow: Asn-297, Asn-335, Asn-352, Asn-415, and Asn-437. Residue Asp-451 is the Charge relay system of the active site.

Belongs to the peptidase S28 family.

Its pathway is mycotoxin biosynthesis. In terms of biological role, serine protease, part of the gene cluster that mediates the biosynthesis of the secondary metabolite victorin, the molecular basis for Victoria blight of oats. Within the pathway, vicPa and vicPb are probably involved in the processing of the vicA1 and vicA2 precursors. The pathway starts with the processing of the precursor vicA1 by several endopeptidases including kexin proteases as well as the cluster-specific S28 family peptidases vicPa and vicPb to produce 7 identical copies of the hexapeptide Gly-Leu-Lys-Leu-Ala-Phe. After being excised from the precursor peptide, the core peptides are cyclized and modified post-translationally by enzymes encoded within the gene cluster. The ustYa family oxidase vicYb is required for the formation of the macrocycle in victorin and the copper amine oxidases (CAOs) vicK1 and vicK2 are responsible for converting victorin to the active form by oxidizing the N-terminal glycyl residue in the peptides to glyoxylate. Relaxed substrate specificity of enzymes in the victorin biosynthetic pathway results in a metabolic grid that produces a set of analogs including victorinines B, C, E or HV-toxin M. This chain is Serine protease vicPb, found in Bipolaris victoriae (strain FI3) (Victoria blight of oats agent).